A 204-amino-acid polypeptide reads, in one-letter code: Large ribosomal subunit protein uL4 (204 aa).

A compositionally biased stretch (polar residues) spans 42 to 55 (GSRQGSKAQKNRSA). Residues 42–85 (GSRQGSKAQKNRSAVSGGGKRPWAQKGTGRARAGTTRGPIWRSG) are disordered. Residues 68 to 79 (GTGRARAGTTRG) show a composition bias toward low complexity.

Belongs to the universal ribosomal protein uL4 family. In terms of assembly, part of the 50S ribosomal subunit.

One of the primary rRNA binding proteins, this protein initially binds near the 5'-end of the 23S rRNA. It is important during the early stages of 50S assembly. It makes multiple contacts with different domains of the 23S rRNA in the assembled 50S subunit and ribosome. In terms of biological role, forms part of the polypeptide exit tunnel. The sequence is that of Large ribosomal subunit protein uL4 from Vesicomyosocius okutanii subsp. Calyptogena okutanii (strain HA).